A 362-amino-acid chain; its full sequence is Protein RecA (362 aa).

Residue 65–72 participates in ATP binding; the sequence is GPESSGKT. The tract at residues 323-362 is disordered; that stretch reads RVANGMEPLNEKSTKETADDKASGKTGENKQETIEEASKE. A compositionally biased stretch (basic and acidic residues) spans 331–362; that stretch reads LNEKSTKETADDKASGKTGENKQETIEEASKE.

Belongs to the RecA family.

It localises to the cytoplasm. Its function is as follows. Can catalyze the hydrolysis of ATP in the presence of single-stranded DNA, the ATP-dependent uptake of single-stranded DNA by duplex DNA, and the ATP-dependent hybridization of homologous single-stranded DNAs. It interacts with LexA causing its activation and leading to its autocatalytic cleavage. This is Protein RecA from Limosilactobacillus reuteri (strain DSM 20016) (Lactobacillus reuteri).